A 206-amino-acid polypeptide reads, in one-letter code: Uracil phosphoribosyltransferase (206 aa).

5-phospho-alpha-D-ribose 1-diphosphate-binding positions include R76, R101, and 128–136; that span reads DPMLATGTT. Uracil-binding positions include I191 and 196–198; that span reads GDA. D197 is a binding site for 5-phospho-alpha-D-ribose 1-diphosphate.

It belongs to the UPRTase family. It depends on Mg(2+) as a cofactor.

The enzyme catalyses UMP + diphosphate = 5-phospho-alpha-D-ribose 1-diphosphate + uracil. It functions in the pathway pyrimidine metabolism; UMP biosynthesis via salvage pathway; UMP from uracil: step 1/1. With respect to regulation, allosterically activated by GTP. In terms of biological role, catalyzes the conversion of uracil and 5-phospho-alpha-D-ribose 1-diphosphate (PRPP) to UMP and diphosphate. This is Uracil phosphoribosyltransferase from Mycoplasma genitalium (strain ATCC 33530 / DSM 19775 / NCTC 10195 / G37) (Mycoplasmoides genitalium).